Here is a 114-residue protein sequence, read N- to C-terminus: uncharacterized protein (114 aa).

Fe cation is bound by residues cysteine 40, cysteine 106, and cysteine 108.

The protein belongs to the HesB/IscA family. Ycf83 subfamily.

It localises to the plastid. It is found in the chloroplast. This is an uncharacterized protein from Pyropia yezoensis (Susabi-nori).